The primary structure comprises 246 residues: 3'(2'),5'-bisphosphate nucleotidase CysQ (246 aa).

Residues Glu-64, Asp-83, Leu-85, Asp-86, and Asp-205 each contribute to the Mg(2+) site. Glu-64 contacts substrate. Substrate contacts are provided by residues 85–88 (LDGT) and Asp-205.

Belongs to the inositol monophosphatase superfamily. CysQ family. Mg(2+) is required as a cofactor.

The protein resides in the cell inner membrane. The enzyme catalyses adenosine 3',5'-bisphosphate + H2O = AMP + phosphate. Functionally, converts adenosine-3',5'-bisphosphate (PAP) to AMP. This is 3'(2'),5'-bisphosphate nucleotidase CysQ from Escherichia coli O157:H7.